Reading from the N-terminus, the 222-residue chain is Protein GrpE (222 aa).

Belongs to the GrpE family. Homodimer.

It is found in the cytoplasm. Its function is as follows. Participates actively in the response to hyperosmotic and heat shock by preventing the aggregation of stress-denatured proteins, in association with DnaK and GrpE. It is the nucleotide exchange factor for DnaK and may function as a thermosensor. Unfolded proteins bind initially to DnaJ; upon interaction with the DnaJ-bound protein, DnaK hydrolyzes its bound ATP, resulting in the formation of a stable complex. GrpE releases ADP from DnaK; ATP binding to DnaK triggers the release of the substrate protein, thus completing the reaction cycle. Several rounds of ATP-dependent interactions between DnaJ, DnaK and GrpE are required for fully efficient folding. The protein is Protein GrpE of Bartonella bacilliformis (strain ATCC 35685 / KC583 / Herrer 020/F12,63).